We begin with the raw amino-acid sequence, 283 residues long: Bifunctional protein FolD (283 aa).

Residues 164–166, serine 189, and isoleucine 230 contribute to the NADP(+) site; that span reads GRS.

Belongs to the tetrahydrofolate dehydrogenase/cyclohydrolase family. In terms of assembly, homodimer.

The catalysed reaction is (6R)-5,10-methylene-5,6,7,8-tetrahydrofolate + NADP(+) = (6R)-5,10-methenyltetrahydrofolate + NADPH. It catalyses the reaction (6R)-5,10-methenyltetrahydrofolate + H2O = (6R)-10-formyltetrahydrofolate + H(+). The protein operates within one-carbon metabolism; tetrahydrofolate interconversion. In terms of biological role, catalyzes the oxidation of 5,10-methylenetetrahydrofolate to 5,10-methenyltetrahydrofolate and then the hydrolysis of 5,10-methenyltetrahydrofolate to 10-formyltetrahydrofolate. This Lacticaseibacillus casei (strain BL23) (Lactobacillus casei) protein is Bifunctional protein FolD.